A 671-amino-acid polypeptide reads, in one-letter code: ATP-dependent zinc metalloprotease FtsH (671 aa).

Over 1–22 (MANPNNNNDNKQNNNNNFFNDN) the chain is Cytoplasmic. Residues 23-43 (PLLAFAIFSIVIILIFKSFVG) form a helical membrane-spanning segment. The Periplasmic segment spans residues 44 to 130 (EGESLGTMMN…ISYEGVVGNG (87 aa)). The chain crosses the membrane as a helical span at residues 131 to 151 (FFSELISMMLPILIFFAIWIF). Residues 152 to 671 (LAKKMSKGMG…SEESDNNKEA (520 aa)) lie on the Cytoplasmic side of the membrane. 224 to 231 (GPPGTGKT) serves as a coordination point for ATP. Zn(2+) is bound at residue H447. E448 is an active-site residue. Positions 451 and 525 each coordinate Zn(2+). Positions 630–671 (EKGMPSRLAHKDKVAKNKAEADKKEEALKKEISEESDNNKEA) are disordered.

The protein in the central section; belongs to the AAA ATPase family. In the C-terminal section; belongs to the peptidase M41 family. In terms of assembly, homohexamer. The cofactor is Zn(2+).

It is found in the cell inner membrane. Acts as a processive, ATP-dependent zinc metallopeptidase for both cytoplasmic and membrane proteins. Plays a role in the quality control of integral membrane proteins. In Sulfurovum sp. (strain NBC37-1), this protein is ATP-dependent zinc metalloprotease FtsH.